Consider the following 190-residue polypeptide: Probable chorismate pyruvate-lyase (190 aa).

Substrate contacts are provided by Arg-77, Leu-115, and Glu-174.

The protein belongs to the UbiC family.

The protein localises to the cytoplasm. The catalysed reaction is chorismate = 4-hydroxybenzoate + pyruvate. It participates in cofactor biosynthesis; ubiquinone biosynthesis. Functionally, removes the pyruvyl group from chorismate, with concomitant aromatization of the ring, to provide 4-hydroxybenzoate (4HB) for the ubiquinone pathway. In Shewanella sp. (strain MR-4), this protein is Probable chorismate pyruvate-lyase.